The chain runs to 530 residues: G2/mitotic-specific cyclin-B (530 aa).

The tract at residues Ala-76 to Asn-152 is disordered. Residues Pro-121–Pro-144 are compositionally biased toward low complexity. Ser-137 bears the Phosphoserine mark.

The protein belongs to the cyclin family. Cyclin AB subfamily. Interacts with the protein kinase Cdk1 to form a serine/threonine kinase holoenzyme complex also known as maturation promoting factor (MPF). The cyclin subunit imparts substrate specificity to the complex.

Functionally, essential for the control of the cell cycle at the G2/M (mitosis) transition. In Drosophila melanogaster (Fruit fly), this protein is G2/mitotic-specific cyclin-B (CycB).